The sequence spans 542 residues: MSTSPFNSRVAPMPHDDATAPVLHYAHDAAGAHDAADAAGAHDAADAAGTPPCAASRTARLRSLDAAHVWHPFTQMRDWMGSEPCIIDAADGNHLIDTDGNRYLDGVSSLWTNVHGHRHPHIDEAIRRQLDRVAHSTLLGLGGTPSIELAARLTAIAPAGLTRVFYSDSGSTAVEAALKIAFQYHRQAPEGDARRTRVMAFSNAYHGDTIGSVSLGGMSLFHGIYGPLLFDPVRAPAPHCYRCPADLRPETCGMACLGEVERLMRHHGHELCAVVVEPLVQGAAGMLVQPRGWLRGLRDLCDRHGVFMVADEVAVGFGKTGTMFACEQEGVVPDMLCLAKGITGGYLPLAATLVTEHIHDGFLGGYADFRTFFHGHTYTGNALACAAALASLDVFEEERTLETLRPRIERLATLLAPLNDLPHVGDIRRVGVMTGIELVADRETRTPYRPEERIGHRVTLEARRRGVIVRPLGDVMVLMPPLSITETELETLVHTVRGAIIAVTEHGADGGLWTKRPDGPDNPDKANTPDTPDGARTGETVV.

Residue 170–171 coordinates pyridoxal 5'-phosphate; the sequence is GS. Residue Tyr-205 coordinates substrate. Position 311 (Asp-311) interacts with pyridoxal 5'-phosphate. The substrate site is built by Lys-340, Gly-375, and Arg-470. An N6-(pyridoxal phosphate)lysine modification is found at Lys-340. A disordered region spans residues 509 to 542; that stretch reads DGGLWTKRPDGPDNPDKANTPDTPDGARTGETVV. Positions 515–524 are enriched in basic and acidic residues; sequence KRPDGPDNPD.

This sequence belongs to the class-III pyridoxal-phosphate-dependent aminotransferase family. BioA subfamily. In terms of assembly, homodimer. It depends on pyridoxal 5'-phosphate as a cofactor.

It localises to the cytoplasm. It carries out the reaction (8S)-8-amino-7-oxononanoate + S-adenosyl-L-methionine = S-adenosyl-4-methylsulfanyl-2-oxobutanoate + (7R,8S)-7,8-diammoniononanoate. The protein operates within cofactor biosynthesis; biotin biosynthesis; 7,8-diaminononanoate from 8-amino-7-oxononanoate (SAM route): step 1/1. Functionally, catalyzes the transfer of the alpha-amino group from S-adenosyl-L-methionine (SAM) to 7-keto-8-aminopelargonic acid (KAPA) to form 7,8-diaminopelargonic acid (DAPA). It is the only aminotransferase known to utilize SAM as an amino donor. The polypeptide is Adenosylmethionine-8-amino-7-oxononanoate aminotransferase (Nitratidesulfovibrio vulgaris (strain ATCC 29579 / DSM 644 / CCUG 34227 / NCIMB 8303 / VKM B-1760 / Hildenborough) (Desulfovibrio vulgaris)).